Here is a 217-residue protein sequence, read N- to C-terminus: Phosphatidylserine decarboxylase proenzyme (217 aa).

S182 (schiff-base intermediate with substrate; via pyruvic acid) is an active-site residue. At S182 the chain carries Pyruvic acid (Ser); by autocatalysis.

This sequence belongs to the phosphatidylserine decarboxylase family. PSD-A subfamily. In terms of assembly, heterodimer of a large membrane-associated beta subunit and a small pyruvoyl-containing alpha subunit. Pyruvate is required as a cofactor. In terms of processing, is synthesized initially as an inactive proenzyme. Formation of the active enzyme involves a self-maturation process in which the active site pyruvoyl group is generated from an internal serine residue via an autocatalytic post-translational modification. Two non-identical subunits are generated from the proenzyme in this reaction, and the pyruvate is formed at the N-terminus of the alpha chain, which is derived from the carboxyl end of the proenzyme. The post-translation cleavage follows an unusual pathway, termed non-hydrolytic serinolysis, in which the side chain hydroxyl group of the serine supplies its oxygen atom to form the C-terminus of the beta chain, while the remainder of the serine residue undergoes an oxidative deamination to produce ammonia and the pyruvoyl prosthetic group on the alpha chain.

The protein resides in the cell membrane. It carries out the reaction a 1,2-diacyl-sn-glycero-3-phospho-L-serine + H(+) = a 1,2-diacyl-sn-glycero-3-phosphoethanolamine + CO2. The protein operates within phospholipid metabolism; phosphatidylethanolamine biosynthesis; phosphatidylethanolamine from CDP-diacylglycerol: step 2/2. Functionally, catalyzes the formation of phosphatidylethanolamine (PtdEtn) from phosphatidylserine (PtdSer). The protein is Phosphatidylserine decarboxylase proenzyme of Nitratidesulfovibrio vulgaris (strain ATCC 29579 / DSM 644 / CCUG 34227 / NCIMB 8303 / VKM B-1760 / Hildenborough) (Desulfovibrio vulgaris).